The sequence spans 90 residues: Probable Fe(2+)-trafficking protein (90 aa).

This sequence belongs to the Fe(2+)-trafficking protein family.

In terms of biological role, could be a mediator in iron transactions between iron acquisition and iron-requiring processes, such as synthesis and/or repair of Fe-S clusters in biosynthetic enzymes. The polypeptide is Probable Fe(2+)-trafficking protein (Vibrio campbellii (strain ATCC BAA-1116)).